Reading from the N-terminus, the 179-residue chain is Large ribosomal subunit protein uL6 (179 aa).

The protein belongs to the universal ribosomal protein uL6 family. In terms of assembly, part of the 50S ribosomal subunit.

Its function is as follows. This protein binds to the 23S rRNA, and is important in its secondary structure. It is located near the subunit interface in the base of the L7/L12 stalk, and near the tRNA binding site of the peptidyltransferase center. In Chloroherpeton thalassium (strain ATCC 35110 / GB-78), this protein is Large ribosomal subunit protein uL6.